Consider the following 465-residue polypeptide: D-arabinitol 4-dehydrogenase (465 aa).

The protein belongs to the mannitol dehydrogenase family.

The catalysed reaction is D-arabinitol + NAD(+) = D-xylulose + NADH + H(+). The protein operates within carbohydrate metabolism; D-arabinitol metabolism. The protein is D-arabinitol 4-dehydrogenase (dalD) of Ralstonia nicotianae (strain ATCC BAA-1114 / GMI1000) (Ralstonia solanacearum).